The chain runs to 412 residues: Multidrug resistance protein MdtG (412 aa).

10 helical membrane-spanning segments follow: residues 20–40 (LFVA…IMPF), 62–82 (LVFS…GGLA), 96–116 (LGMS…QFLI), 119–139 (ALLG…ATQI), 150–170 (TLST…GLLA), 177–197 (PVFF…LYFI), 225–245 (VLCL…IAPI), 260–280 (LAFI…MSAP), 294–314 (ILVA…LVQT), and 382–402 (TVFF…YWCL).

This sequence belongs to the major facilitator superfamily. DHA1 family. MdtG (TC 2.A.1.2.20) subfamily.

Its subcellular location is the cell inner membrane. The sequence is that of Multidrug resistance protein MdtG from Rahnella sp. (strain Y9602).